Reading from the N-terminus, the 457-residue chain is Cysteine--tRNA ligase (457 aa).

Position 30 (Cys30) interacts with Zn(2+). A 'HIGH' region motif is present at residues 32 to 42 (PTVYAPAHIGN). Zn(2+) is bound by residues Cys221, His246, and Glu250. The 'KMSKS' region signature appears at 278–282 (KMSKS). Lys281 contributes to the ATP binding site.

It belongs to the class-I aminoacyl-tRNA synthetase family. Monomer. Zn(2+) serves as cofactor.

It is found in the cytoplasm. It catalyses the reaction tRNA(Cys) + L-cysteine + ATP = L-cysteinyl-tRNA(Cys) + AMP + diphosphate. The chain is Cysteine--tRNA ligase from Opitutus terrae (strain DSM 11246 / JCM 15787 / PB90-1).